The sequence spans 310 residues: Porphobilinogen deaminase (310 aa).

Residue Cys242 is modified to S-(dipyrrolylmethanemethyl)cysteine.

The protein belongs to the HMBS family. Monomer. Requires dipyrromethane as cofactor.

It catalyses the reaction 4 porphobilinogen + H2O = hydroxymethylbilane + 4 NH4(+). It functions in the pathway porphyrin-containing compound metabolism; protoporphyrin-IX biosynthesis; coproporphyrinogen-III from 5-aminolevulinate: step 2/4. Tetrapolymerization of the monopyrrole PBG into the hydroxymethylbilane pre-uroporphyrinogen in several discrete steps. The polypeptide is Porphobilinogen deaminase (Shewanella baltica (strain OS155 / ATCC BAA-1091)).